The primary structure comprises 173 residues: Translation initiation factor IF-3 (173 aa).

This sequence belongs to the IF-3 family. Monomer.

It localises to the cytoplasm. Its function is as follows. IF-3 binds to the 30S ribosomal subunit and shifts the equilibrium between 70S ribosomes and their 50S and 30S subunits in favor of the free subunits, thus enhancing the availability of 30S subunits on which protein synthesis initiation begins. In Methylobacterium sp. (strain 4-46), this protein is Translation initiation factor IF-3.